The chain runs to 492 residues: NADH-quinone oxidoreductase subunit N (492 aa).

14 consecutive transmembrane segments (helical) span residues 16–36 (LLIP…VGVF), 44–64 (LYIT…FLEG), 81–101 (ISLL…LFFM), 111–131 (GAEF…MASS), 134–154 (LILI…LIAL), 168–188 (FIMG…LYAA), 210–230 (ILVF…VTLV), 244–264 (NALL…AVII), 276–296 (AFVE…PNLI), 306–326 (MLAY…LINT), 332–352 (VIFF…GILW), 382–402 (LAIL…FCVF), 423–443 (IMAI…IYIF), and 463–483 (FALS…QNLL).

This sequence belongs to the complex I subunit 2 family. In terms of assembly, NDH-1 is composed of 14 different subunits. Subunits NuoA, H, J, K, L, M, N constitute the membrane sector of the complex.

It is found in the cell inner membrane. The enzyme catalyses a quinone + NADH + 5 H(+)(in) = a quinol + NAD(+) + 4 H(+)(out). Functionally, NDH-1 shuttles electrons from NADH, via FMN and iron-sulfur (Fe-S) centers, to quinones in the respiratory chain. The immediate electron acceptor for the enzyme in this species is believed to be ubiquinone. Couples the redox reaction to proton translocation (for every two electrons transferred, four hydrogen ions are translocated across the cytoplasmic membrane), and thus conserves the redox energy in a proton gradient. The chain is NADH-quinone oxidoreductase subunit N from Helicobacter hepaticus (strain ATCC 51449 / 3B1).